The primary structure comprises 159 residues: MAVLLKLGVLCSGQGARALSLRSRAVRPAFVSAFLQDQPTPGWRGTQHIHLSPSHQSGSKAASLHWTSERVVSVLLLGLIPAGYLNPCSVVDYSLAAALTLHSHWGIGQVVTDYVHGDALQKATKAGLLAVSALTFAGLCYFNYHDVGICRAVAMLWKL.

A mitochondrion-targeting transit peptide spans 1–56; sequence MAVLLKLGVLCSGQGARALSLRSRAVRPAFVSAFLQDQPTPGWRGTQHIHLSPSHQ. At 57–63 the chain is on the mitochondrial matrix side; it reads SGSKAAS. The chain crosses the membrane as a helical span at residues 64–85; the sequence is LHWTSERVVSVLLLGLIPAGYL. Over 86-90 the chain is Mitochondrial intermembrane; sequence NPCSV. The helical transmembrane segment at 91-111 threads the bilayer; that stretch reads VDYSLAAALTLHSHWGIGQVV. H102 contributes to the heme b binding site. Residues 112–120 are Mitochondrial matrix-facing; the sequence is TDYVHGDAL. Residue Y114 coordinates a ubiquinone. Residues 121–142 form a helical membrane-spanning segment; it reads QKATKAGLLAVSALTFAGLCYF. The Mitochondrial intermembrane portion of the chain corresponds to 143-159; sequence NYHDVGICRAVAMLWKL.

The protein belongs to the CybS family. Component of complex II composed of four subunits: the flavoprotein (FP) SDHA, iron-sulfur protein (IP) SDHB, and a cytochrome b560 composed of SDHC and SDHD.

It is found in the mitochondrion inner membrane. The protein operates within carbohydrate metabolism; tricarboxylic acid cycle. Functionally, membrane-anchoring subunit of succinate dehydrogenase (SDH) that is involved in complex II of the mitochondrial electron transport chain and is responsible for transferring electrons from succinate to ubiquinone (coenzyme Q). SDH also oxidizes malate to the non-canonical enol form of oxaloacetate, enol-oxaloacetate. Enol-oxaloacetate, which is a potent inhibitor of the succinate dehydrogenase activity, is further isomerized into keto-oxaloacetate. The polypeptide is Succinate dehydrogenase [ubiquinone] cytochrome b small subunit, mitochondrial (Sdhd) (Rattus norvegicus (Rat)).